The chain runs to 576 residues: Peroxisomal targeting signal receptor (576 aa).

Cys-10 is covalently cross-linked (Glycyl cysteine thioester (Cys-Gly) (interchain with G-Cter in ubiquitin)). The interval 11–33 is amphipathic helix 1 (AH1); sequence AAGSNPLAQFTKHTQHDTSLQQS. Lys-22 is covalently cross-linked (Glycyl lysine isopeptide (Lys-Gly) (interchain with G-Cter in ubiquitin)). Residues 58–75 form an amphipathic helix 2 (AH2) region; sequence RQQMDQFMQQQNNPAFNF. 2 short sequence motifs (wxxxF/Y motif) span residues 100–104 and 128–132; these read WNQEF and WAQDF. The disordered stretch occupies residues 176 to 195; it reads AQMQQQNPAQAQTSEQSQTQ. A WxxxF/Y motif 3 motif is present at residues 196–200; sequence WEDQF. Residues 224 to 240 form an amphipathic helix 4 (AH4) region; the sequence is FEQVWDDIQVSYADVEL. A WxxxF/Y motif 4 motif is present at residues 249-253; the sequence is WEKDF. TPR repeat units lie at residues 278-311, 312-345, 346-383, 384-421, 422-455, 456-489, and 490-523; these read PDAYEIGMRLMESGAKLSEAGLAFEAAVQQDPKH, VDAWLKLGEVQTQNEKESDGIAALEKCLELDPTN, LAALMTLAISYINDGYDNAAYATLERWIETKYPDIASR, ARSSNPDLDGGDRIEQNKRVTELFMKAAQLSPDVASMD, ADVQTGLGVLFYSMEEFDKTIDCFKAAIEVEPDK, ALNWNRLGAALANYNKPEEAVEAYSRALQLNPNF, and VRARYNLGVSFINMGRYKEAVEHLLTGISLHEVE.

It belongs to the peroxisomal targeting signal receptor family. In terms of assembly, interacts (via WxxxF/Y and LVxEF motifs) with PEX14; promoting translocation through the PEX13-PEX14 docking complex. Interacts with PEX8. A disulfide bond is created between Cys-10 and Cys-338 or Cys-444. Post-translationally, monoubiquitinated at Cys-10 by PEX2 during PEX5 passage through the retrotranslocation channel: monoubiquitination acts as a signal for PEX5 extraction and is required for proper export from peroxisomes and recycling. When PEX5 recycling is compromised, polyubiquitinated at Lys-22 by PEX10 during its passage through the retrotranslocation channel, leading to its degradation.

The protein resides in the peroxisome membrane. Its subcellular location is the cytoplasm. It localises to the cytosol. The protein localises to the peroxisome matrix. Receptor that mediates peroxisomal import of proteins containing a C-terminal PTS1-type tripeptide peroxisomal targeting signal (SKL-type). Binds to cargo proteins containing a PTS1 peroxisomal targeting signal in the cytosol, and translocates them into the peroxisome matrix by passing through the peroxisomal docking complex along with cargo proteins. PEX5 receptor is then retrotranslocated into the cytosol, leading to release of bound cargo in the peroxisome matrix, and reset for a subsequent peroxisome import cycle. Required for PEX7 ubiquitination. In Komagataella phaffii (strain GS115 / ATCC 20864) (Yeast), this protein is Peroxisomal targeting signal receptor.